Here is a 297-residue protein sequence, read N- to C-terminus: Probable E3 SUMO-protein ligase RNF212 (297 aa).

An RING-type zinc finger spans residues cysteine 7 to lysine 46. A coiled-coil region spans residues arginine 91–serine 124.

It localises to the nucleus. It is found in the chromosome. The protein operates within protein modification; protein sumoylation. Its function is as follows. SUMO E3 ligase that acts as a regulator of crossing-over during meiosis: required to couple chromosome synapsis to the formation of crossover-specific recombination complexes. Localizes to recombination sites and stabilizes meiosis-specific recombination factors, such as MutS-gamma complex proteins (MSH4 and MSH5) and TEX11. May mediate sumoylation of target proteins MSH4 and/or MSH5, leading to enhance their binding to recombination sites. Acts as a limiting factor for crossover designation and/or reinforcement and plays an antagonist role with CCNB1IP1/HEI10 in the regulation of meiotic recombination. This chain is Probable E3 SUMO-protein ligase RNF212 (RNF212), found in Homo sapiens (Human).